The sequence spans 299 residues: Aspartate carbamoyltransferase catalytic subunit (299 aa).

Positions 51 and 52 each coordinate carbamoyl phosphate. Lys-80 is an L-aspartate binding site. Arg-101, His-129, and Gln-132 together coordinate carbamoyl phosphate. 2 residues coordinate L-aspartate: Arg-162 and Arg-221. Positions 260 and 261 each coordinate carbamoyl phosphate.

This sequence belongs to the aspartate/ornithine carbamoyltransferase superfamily. ATCase family. In terms of assembly, heterooligomer of catalytic and regulatory chains.

It carries out the reaction carbamoyl phosphate + L-aspartate = N-carbamoyl-L-aspartate + phosphate + H(+). The protein operates within pyrimidine metabolism; UMP biosynthesis via de novo pathway; (S)-dihydroorotate from bicarbonate: step 2/3. Catalyzes the condensation of carbamoyl phosphate and aspartate to form carbamoyl aspartate and inorganic phosphate, the committed step in the de novo pyrimidine nucleotide biosynthesis pathway. The sequence is that of Aspartate carbamoyltransferase catalytic subunit from Sulfolobus acidocaldarius (strain ATCC 33909 / DSM 639 / JCM 8929 / NBRC 15157 / NCIMB 11770).